Reading from the N-terminus, the 440-residue chain is Trigger factor (440 aa).

Positions 163 to 248 (GDTVNIDFDG…INEIKYKNVP (86 aa)) constitute a PPIase FKBP-type domain.

This sequence belongs to the FKBP-type PPIase family. Tig subfamily.

The protein resides in the cytoplasm. It catalyses the reaction [protein]-peptidylproline (omega=180) = [protein]-peptidylproline (omega=0). Its function is as follows. Involved in protein export. Acts as a chaperone by maintaining the newly synthesized protein in an open conformation. Functions as a peptidyl-prolyl cis-trans isomerase. This Staphylococcus carnosus (strain TM300) protein is Trigger factor.